A 130-amino-acid polypeptide reads, in one-letter code: Abscisic acid and environmental stress-inducible protein TAS14 (130 aa).

The tract at residues 1 to 130 is disordered; it reads MAQYGNQDQM…KIKDKIPGMH (130 aa). A compositionally biased stretch (gly residues) spans 27–58; it reads QGTGTGGMMGGTGTGGMMGGTGGEYGTQGMGT. 2 stretches are compositionally biased toward basic and acidic residues: residues 61 to 73 and 92 to 130; these read HHHE…RRSD and KEKI…PGMH.

The protein belongs to the plant dehydrin family.

The polypeptide is Abscisic acid and environmental stress-inducible protein TAS14 (TAS14) (Solanum lycopersicum (Tomato)).